Consider the following 202-residue polypeptide: LexA repressor (202 aa).

Positions 32–52 (RAEVCSAFGFKSPNAAETHLR) form a DNA-binding region, H-T-H motif. Catalysis depends on for autocatalytic cleavage activity residues Ser121 and Lys158.

The protein belongs to the peptidase S24 family. In terms of assembly, homodimer.

It carries out the reaction Hydrolysis of Ala-|-Gly bond in repressor LexA.. Its function is as follows. Represses a number of genes involved in the response to DNA damage (SOS response), including recA and lexA. In the presence of single-stranded DNA, RecA interacts with LexA causing an autocatalytic cleavage which disrupts the DNA-binding part of LexA, leading to derepression of the SOS regulon and eventually DNA repair. This is LexA repressor from Azoarcus sp. (strain BH72).